We begin with the raw amino-acid sequence, 653 residues long: UvrABC system protein C (653 aa).

One can recognise a GIY-YIG domain in the interval 44–122 (NAPGVYRMVN…IKRLRPRFNV (79 aa)). The UVR domain maps to 232–267 (STVKAEIATAMQEASQALDFERAAIYRDRLAALSHV).

The protein belongs to the UvrC family. Interacts with UvrB in an incision complex.

The protein resides in the cytoplasm. Functionally, the UvrABC repair system catalyzes the recognition and processing of DNA lesions. UvrC both incises the 5' and 3' sides of the lesion. The N-terminal half is responsible for the 3' incision and the C-terminal half is responsible for the 5' incision. The sequence is that of UvrABC system protein C from Chelativorans sp. (strain BNC1).